Reading from the N-terminus, the 163-residue chain is Urease accessory protein UreE (163 aa).

The interval 130–163 (PFEPEPGAYGGGHGHTHSHDHSHQHDPAGHAHEH) is disordered. Basic and acidic residues predominate over residues 146 to 163 (HSHDHSHQHDPAGHAHEH).

The protein belongs to the UreE family.

It localises to the cytoplasm. Its function is as follows. Involved in urease metallocenter assembly. Binds nickel. Probably functions as a nickel donor during metallocenter assembly. This is Urease accessory protein UreE from Alkalilimnicola ehrlichii (strain ATCC BAA-1101 / DSM 17681 / MLHE-1).